Reading from the N-terminus, the 108-residue chain is Thiosulfate sulfurtransferase GlpE (108 aa).

The Rhodanese domain maps to 17-105 (VSQSAILVDV…WLREFPQAIT (89 aa)). Cys65 serves as the catalytic Cysteine persulfide intermediate.

The protein belongs to the GlpE family.

The protein localises to the cytoplasm. The enzyme catalyses thiosulfate + hydrogen cyanide = thiocyanate + sulfite + 2 H(+). It catalyses the reaction thiosulfate + [thioredoxin]-dithiol = [thioredoxin]-disulfide + hydrogen sulfide + sulfite + 2 H(+). Its function is as follows. Transferase that catalyzes the transfer of sulfur from thiosulfate to thiophilic acceptors such as cyanide or dithiols. May function in a CysM-independent thiosulfate assimilation pathway by catalyzing the conversion of thiosulfate to sulfite, which can then be used for L-cysteine biosynthesis. The sequence is that of Thiosulfate sulfurtransferase GlpE from Proteus mirabilis (strain HI4320).